The following is a 216-amino-acid chain: FMN-dependent NADH:quinone oxidoreductase 2 (216 aa).

Residues Ser-9, 15–17 (SVS), 96–99 (MYNF), and 140–143 (SRGG) each bind FMN.

This sequence belongs to the azoreductase type 1 family. Homodimer. The cofactor is FMN.

The enzyme catalyses 2 a quinone + NADH + H(+) = 2 a 1,4-benzosemiquinone + NAD(+). It carries out the reaction N,N-dimethyl-1,4-phenylenediamine + anthranilate + 2 NAD(+) = 2-(4-dimethylaminophenyl)diazenylbenzoate + 2 NADH + 2 H(+). Quinone reductase that provides resistance to thiol-specific stress caused by electrophilic quinones. Its function is as follows. Also exhibits azoreductase activity. Catalyzes the reductive cleavage of the azo bond in aromatic azo compounds to the corresponding amines. This is FMN-dependent NADH:quinone oxidoreductase 2 from Xanthomonas axonopodis pv. citri (strain 306).